The sequence spans 91 residues: Defensin-like protein 269 (91 aa).

A signal peptide spans 1–25 (MAVSKTTMLIVLVAIILSCVSISNA). Intrachain disulfides connect cysteine 41–cysteine 82, cysteine 53–cysteine 72, cysteine 59–cysteine 77, and cysteine 63–cysteine 79.

This sequence belongs to the DEFL family.

It localises to the secreted. The protein is Defensin-like protein 269 of Arabidopsis thaliana (Mouse-ear cress).